Here is a 476-residue protein sequence, read N- to C-terminus: Glycogen synthase (476 aa).

Lys-15 is an ADP-alpha-D-glucose binding site.

This sequence belongs to the glycosyltransferase 1 family. Bacterial/plant glycogen synthase subfamily.

It carries out the reaction [(1-&gt;4)-alpha-D-glucosyl](n) + ADP-alpha-D-glucose = [(1-&gt;4)-alpha-D-glucosyl](n+1) + ADP + H(+). It participates in glycan biosynthesis; glycogen biosynthesis. In terms of biological role, synthesizes alpha-1,4-glucan chains using ADP-glucose. This chain is Glycogen synthase, found in Marinomonas sp. (strain MWYL1).